A 232-amino-acid chain; its full sequence is Aliphatic sulfonates import ATP-binding protein SsuB 2 (232 aa).

One can recognise an ABC transporter domain in the interval 1–216 (MDIRVDRKAF…PRDRRDPLLA (216 aa)). Residue 33-40 (GPSGCGKS) coordinates ATP.

It belongs to the ABC transporter superfamily. Aliphatic sulfonates importer (TC 3.A.1.17.2) family. In terms of assembly, the complex is composed of two ATP-binding proteins (SsuB), two transmembrane proteins (SsuC) and a solute-binding protein (SsuA).

The protein resides in the cell inner membrane. It catalyses the reaction ATP + H2O + aliphatic sulfonate-[sulfonate-binding protein]Side 1 = ADP + phosphate + aliphatic sulfonateSide 2 + [sulfonate-binding protein]Side 1.. In terms of biological role, part of the ABC transporter complex SsuABC involved in aliphatic sulfonates import. Responsible for energy coupling to the transport system. This is Aliphatic sulfonates import ATP-binding protein SsuB 2 from Pseudomonas syringae pv. tomato (strain ATCC BAA-871 / DC3000).